The following is a 317-amino-acid chain: Ribosomal protein L11 methyltransferase (317 aa).

4 residues coordinate S-adenosyl-L-methionine: threonine 158, glycine 179, aspartate 201, and asparagine 244.

The protein belongs to the methyltransferase superfamily. PrmA family.

The protein resides in the cytoplasm. The catalysed reaction is L-lysyl-[protein] + 3 S-adenosyl-L-methionine = N(6),N(6),N(6)-trimethyl-L-lysyl-[protein] + 3 S-adenosyl-L-homocysteine + 3 H(+). Functionally, methylates ribosomal protein L11. The chain is Ribosomal protein L11 methyltransferase from Streptococcus pyogenes serotype M12 (strain MGAS2096).